The chain runs to 94 residues: Exodeoxyribonuclease 7 small subunit (94 aa).

The protein belongs to the XseB family. In terms of assembly, heterooligomer composed of large and small subunits.

It is found in the cytoplasm. It catalyses the reaction Exonucleolytic cleavage in either 5'- to 3'- or 3'- to 5'-direction to yield nucleoside 5'-phosphates.. Functionally, bidirectionally degrades single-stranded DNA into large acid-insoluble oligonucleotides, which are then degraded further into small acid-soluble oligonucleotides. This is Exodeoxyribonuclease 7 small subunit from Ralstonia nicotianae (strain ATCC BAA-1114 / GMI1000) (Ralstonia solanacearum).